Consider the following 393-residue polypeptide: S-adenosylmethionine synthase 2 (393 aa).

Glutamate 9 contacts Mg(2+). Histidine 15 serves as a coordination point for ATP. Position 43 (glutamate 43) interacts with K(+). L-methionine contacts are provided by glutamate 56 and glutamine 99. Residues 167 to 169 (DGK), 235 to 238 (SGRF), aspartate 246, 252 to 253 (RK), alanine 269, lysine 273, and lysine 277 each bind ATP. Aspartate 246 contacts L-methionine. Lysine 277 contributes to the L-methionine binding site.

Belongs to the AdoMet synthase family. In terms of assembly, homotetramer. Mn(2+) serves as cofactor. Requires Mg(2+) as cofactor. The cofactor is Co(2+). K(+) is required as a cofactor. As to expression, mostly expressed in flowers, seedpods and roots, and, to a lower extent, in stems and leaves.

The protein localises to the cytoplasm. It carries out the reaction L-methionine + ATP + H2O = S-adenosyl-L-methionine + phosphate + diphosphate. It functions in the pathway amino-acid biosynthesis; S-adenosyl-L-methionine biosynthesis; S-adenosyl-L-methionine from L-methionine: step 1/1. Catalyzes the formation of S-adenosylmethionine from methionine and ATP. The reaction comprises two steps that are both catalyzed by the same enzyme: formation of S-adenosylmethionine (AdoMet) and triphosphate, and subsequent hydrolysis of the triphosphate. This Brassica juncea (Indian mustard) protein is S-adenosylmethionine synthase 2 (MSAMS2).